The following is a 1671-amino-acid chain: AF4/FMR2 family member lilli (1671 aa).

Disordered regions lie at residues 53–79 (YSQN…QQGI), 126–304 (SAPG…EKDV), 393–599 (LAGE…SNKW), 723–761 (DSGT…QLPG), 774–1162 (PTQS…TTPH), and 1185–1311 (KLTP…LQIG). Basic and acidic residues predominate over residues 70-79 (REKIERQQGI). Low complexity-rich tracts occupy residues 145-179 (SLGH…QQQQ) and 210-242 (PSSS…SSGG). Thr416 carries the phosphothreonine modification. Basic and acidic residues predominate over residues 424–437 (LKTEKNHSLEKQDS). Over residues 439-450 (LENDLELSESED) the composition is skewed to acidic residues. 2 positions are modified to phosphoserine: Ser446 and Ser448. Residues 459–479 (SAGNSSNSSESDSSESGSESS) show a composition bias toward low complexity. Positions 487–496 (HPNHQQHHHQ) are enriched in basic residues. Composition is skewed to low complexity over residues 497 to 522 (LQQQ…PQPL) and 561 to 587 (PAGV…GSSS). Polar residues predominate over residues 588 to 599 (NKTPSPTESNKW). Residues 723-755 (DSGTSASGSSSSSSSSSDSAVGGEVVPMPGPGE) are compositionally biased toward low complexity. Polar residues predominate over residues 774 to 786 (PTQSQKAPPSNSV). Residues 800-810 (QRQKKPRKKKA) are compositionally biased toward basic residues. 2 positions are modified to phosphoserine: Ser819 and Ser820. The a.T hook DNA-binding region spans 849–861 (KKGRGRPRKQQQS). Low complexity predominate over residues 858-896 (QQQSGGSGNLSSASAGSSSQTKGPTLTAAKKPLAKTPLA). A phosphoserine mark is found at Ser869 and Ser871. Residues 907–917 (SQSSSNGNTPT) show a composition bias toward polar residues. Composition is skewed to low complexity over residues 947-963 (SSSA…SSSS) and 988-1002 (ALLG…SSGS). Polar residues predominate over residues 1009–1020 (SRSQVGSGQALA). Low complexity predominate over residues 1032–1058 (SQHSQHLSSSECSSSSGGCTAVCSSSS). Basic and acidic residues predominate over residues 1063 to 1080 (EGRREKERERKPKSDKNK). Residues 1120–1130 (QPPPPHAPPAA) are compositionally biased toward pro residues. Residues 1188 to 1203 (PAQQNGHLTPKDQATN) are compositionally biased toward polar residues. Composition is skewed to basic and acidic residues over residues 1224 to 1241 (EHPV…EAKF) and 1250 to 1280 (FQLK…EQPP). A Phosphoserine modification is found at Ser1360. Thr1362 carries the phosphothreonine modification. Residues 1562-1581 (NTPSSISPSNSVGSQGSGSN) show a composition bias toward low complexity. The tract at residues 1562-1586 (NTPSSISPSNSVGSQGSGSNTPPGR) is disordered.

It belongs to the AF4 family.

It is found in the nucleus. Its function is as follows. Has a role in transcriptional regulation. Acts in parallel with the Ras/MAPK and the PI3K/PKB pathways in the control of cell identity and cellular growth. Essential for regulation of the cytoskeleton and cell growth but not for cell proliferation or growth rate. Required specifically for the microtubule-based basal transport of lipid droplets. Plays a partially redundant function downstream of Raf in cell fate specification in the developing eye. Pair-rule protein that regulates embryonic cellularization, gastrulation and segmentation. The polypeptide is AF4/FMR2 family member lilli (Drosophila yakuba (Fruit fly)).